The following is a 403-amino-acid chain: Ribosomal RNA large subunit methyltransferase I (403 aa).

The 80-residue stretch at 9–88 (YPRLVLSKGR…ESIDIAFFTR (80 aa)) folds into the PUA domain.

It belongs to the methyltransferase superfamily. RlmI family.

It localises to the cytoplasm. The enzyme catalyses cytidine(1962) in 23S rRNA + S-adenosyl-L-methionine = 5-methylcytidine(1962) in 23S rRNA + S-adenosyl-L-homocysteine + H(+). Functionally, specifically methylates the cytosine at position 1962 (m5C1962) of 23S rRNA. The chain is Ribosomal RNA large subunit methyltransferase I from Salmonella agona (strain SL483).